Here is a 436-residue protein sequence, read N- to C-terminus: 3-ketoacyl-CoA thiolase (436 aa).

Cys-99 (acyl-thioester intermediate) is an active-site residue. Catalysis depends on proton acceptor residues His-392 and Cys-422.

Belongs to the thiolase-like superfamily. Thiolase family. As to quaternary structure, heterotetramer of two alpha chains (FadJ) and two beta chains (FadI).

It is found in the cytoplasm. It catalyses the reaction an acyl-CoA + acetyl-CoA = a 3-oxoacyl-CoA + CoA. It participates in lipid metabolism; fatty acid beta-oxidation. Functionally, catalyzes the final step of fatty acid oxidation in which acetyl-CoA is released and the CoA ester of a fatty acid two carbons shorter is formed. In Cronobacter sakazakii (strain ATCC BAA-894) (Enterobacter sakazakii), this protein is 3-ketoacyl-CoA thiolase.